The chain runs to 339 residues: Nitrilase 2 (339 aa).

The residue at position 2 (Ser-2) is an N-acetylserine. The region spanning 18 to 290 (VRATIVQAST…EGLITADLDL (273 aa)) is the CN hydrolase domain. Catalysis depends on Glu-58, which acts as the Proton acceptor. Lys-145 serves as the catalytic Proton donor. Cys-179 functions as the Nucleophile in the catalytic mechanism.

Belongs to the carbon-nitrogen hydrolase superfamily. Nitrilase family.

The protein localises to the cell membrane. The enzyme catalyses a nitrile + 2 H2O = a carboxylate + NH4(+). Its function is as follows. Can convert indole-3-acetonitrile to the plant hormone indole-3-acetic acid. The polypeptide is Nitrilase 2 (NIT2) (Arabidopsis thaliana (Mouse-ear cress)).